Consider the following 365-residue polypeptide: LIM and cysteine-rich domains protein 1 (365 aa).

Ser16 bears the Phosphoserine mark. The PET domain occupies 99–206 (MIMTNPIATG…GEVALPGQGG (108 aa)). The tract at residues 200-235 (ALPGQGGLPKEEGKQQEKPEGAETTAATTNGSLSDP) is disordered. The span at 208 to 220 (PKEEGKQQEKPEG) shows a compositional bias: basic and acidic residues. LIM zinc-binding domains are found at residues 241-306 (YVCE…SLRP) and 307-365 (RCSG…SKRS).

In terms of assembly, interacts with GATA1 and GATA4. Interacts with beta-dystroglycan. Interacts with GATA6. As to expression, expressed in the heart (at protein level). Expressed in many tissues with highest abundance in skeletal muscle.

The protein localises to the cytoplasm. The protein resides in the nucleus. Transcriptional cofactor that restricts GATA6 function by inhibiting DNA-binding, resulting in repression of GATA6 transcriptional activation of downstream target genes. Represses GATA6-mediated trans activation of lung- and cardiac tissue-specific promoters. Inhibits DNA-binding by GATA4 and GATA1 to the cTNC promoter. Plays a critical role in the development of cardiac hypertrophy via activation of calcineurin/nuclear factor of activated T-cells signaling pathway. The protein is LIM and cysteine-rich domains protein 1 (LMCD1) of Homo sapiens (Human).